We begin with the raw amino-acid sequence, 447 residues long: Glycogen synthase (447 aa).

Position 15 (Arg-15) interacts with ADP-alpha-D-glucose.

It belongs to the glycosyltransferase 1 family. Bacterial/plant glycogen synthase subfamily.

It catalyses the reaction [(1-&gt;4)-alpha-D-glucosyl](n) + ADP-alpha-D-glucose = [(1-&gt;4)-alpha-D-glucosyl](n+1) + ADP + H(+). It participates in glycan biosynthesis; glycogen biosynthesis. Its function is as follows. Synthesizes alpha-1,4-glucan chains using ADP-glucose. This Deinococcus geothermalis (strain DSM 11300 / CIP 105573 / AG-3a) protein is Glycogen synthase.